A 379-amino-acid polypeptide reads, in one-letter code: Glutamate 5-kinase (379 aa).

Lys-20 serves as a coordination point for ATP. Residues Ser-59, Asp-146, and Asn-158 each contribute to the substrate site. An ATP-binding site is contributed by 220–226 (SGGMYSK). The PUA domain maps to 285 to 362 (TGSVVVDDGA…AELTAILGDN (78 aa)).

This sequence belongs to the glutamate 5-kinase family.

It localises to the cytoplasm. The catalysed reaction is L-glutamate + ATP = L-glutamyl 5-phosphate + ADP. It functions in the pathway amino-acid biosynthesis; L-proline biosynthesis; L-glutamate 5-semialdehyde from L-glutamate: step 1/2. Its function is as follows. Catalyzes the transfer of a phosphate group to glutamate to form L-glutamate 5-phosphate. The protein is Glutamate 5-kinase of Oleidesulfovibrio alaskensis (strain ATCC BAA-1058 / DSM 17464 / G20) (Desulfovibrio alaskensis).